The primary structure comprises 120 residues: NAD(P)H-quinone oxidoreductase subunit 3, chloroplastic (120 aa).

Transmembrane regions (helical) follow at residues 10 to 30 (LWFF…ISEI), 64 to 84 (MFAL…PWAI), and 89 to 109 (LGIS…VGLV).

This sequence belongs to the complex I subunit 3 family. In terms of assembly, NDH is composed of at least 16 different subunits, 5 of which are encoded in the nucleus.

The protein localises to the plastid. Its subcellular location is the chloroplast thylakoid membrane. It catalyses the reaction a plastoquinone + NADH + (n+1) H(+)(in) = a plastoquinol + NAD(+) + n H(+)(out). It carries out the reaction a plastoquinone + NADPH + (n+1) H(+)(in) = a plastoquinol + NADP(+) + n H(+)(out). Functionally, NDH shuttles electrons from NAD(P)H:plastoquinone, via FMN and iron-sulfur (Fe-S) centers, to quinones in the photosynthetic chain and possibly in a chloroplast respiratory chain. The immediate electron acceptor for the enzyme in this species is believed to be plastoquinone. Couples the redox reaction to proton translocation, and thus conserves the redox energy in a proton gradient. In Chara vulgaris (Common stonewort), this protein is NAD(P)H-quinone oxidoreductase subunit 3, chloroplastic.